A 473-amino-acid polypeptide reads, in one-letter code: Lactate utilization protein B 2 (473 aa).

4Fe-4S ferredoxin-type domains lie at 302–332 (GSEFRSILQCIRCAACVNVCPVYRHVGGHSY) and 351–380 (YDDYKELPYASSLCGACTEACPVKIPLHDL). [4Fe-4S] cluster is bound by residues cysteine 311, cysteine 314, cysteine 317, cysteine 321, cysteine 364, cysteine 367, and cysteine 371.

The protein belongs to the LutB/YkgF family.

In terms of biological role, is involved in L-lactate degradation and allows cells to grow with lactate as the sole carbon source. Has probably a role as an electron transporter during oxidation of L-lactate. This Bacillus mycoides (strain KBAB4) (Bacillus weihenstephanensis) protein is Lactate utilization protein B 2.